A 123-amino-acid polypeptide reads, in one-letter code: Large ribosomal subunit protein uL14c (123 aa).

Belongs to the universal ribosomal protein uL14 family. As to quaternary structure, part of the 50S ribosomal subunit.

It localises to the plastid. The protein localises to the chloroplast. Functionally, binds to 23S rRNA. This is Large ribosomal subunit protein uL14c from Oryza nivara (Indian wild rice).